The sequence spans 144 residues: Cytochrome c3 (144 aa).

The N-terminal stretch at 1 to 24 (MRYLVISLFAVSLLMAGSALVGNA) is a signal peptide. Residues His51, His54, Cys59, Cys62, His63, His64, Cys76, Cys81, His82, His100, Cys108, Cys111, His112, Cys125, Cys128, and His129 each coordinate heme c.

This sequence belongs to the cytochrome c family. As to quaternary structure, homodimer. Heterotrimer of cytochrome c3 FDH2C and formate dehydrogenase FDH2 alpha and beta subunits that forms the FdhABC(3) complex. Post-translationally, binds 4 heme c groups per subunit.

The protein resides in the periplasm. Functionally, participates in sulfate respiration coupled with phosphorylation by transferring electrons from the enzyme dehydrogenase to ferredoxin. Gamma chain of the formate dehydrogenase (FDH) that catalyzes the reversible two-electron oxidation of formate to carbon dioxide. The gamma subunit of formate dehydrogenase forms a c-type heme. The sequence is that of Cytochrome c3 from Nitratidesulfovibrio vulgaris (strain ATCC 29579 / DSM 644 / CCUG 34227 / NCIMB 8303 / VKM B-1760 / Hildenborough) (Desulfovibrio vulgaris).